A 276-amino-acid polypeptide reads, in one-letter code: Orotidine 5'-phosphate decarboxylase (276 aa).

Residue K96 is the Proton donor of the active site.

The protein belongs to the OMP decarboxylase family. Type 2 subfamily.

The catalysed reaction is orotidine 5'-phosphate + H(+) = UMP + CO2. It functions in the pathway pyrimidine metabolism; UMP biosynthesis via de novo pathway; UMP from orotate: step 2/2. The polypeptide is Orotidine 5'-phosphate decarboxylase (Porphyromonas gingivalis (strain ATCC 33277 / DSM 20709 / CIP 103683 / JCM 12257 / NCTC 11834 / 2561)).